The chain runs to 274 residues: uncharacterized protein (274 aa).

The N-terminal stretch at Met-1–Ala-21 is a signal peptide. Residues Thr-249–Phe-266 traverse the membrane as a helical segment.

The protein localises to the membrane. This is an uncharacterized protein from Archaeoglobus fulgidus (strain ATCC 49558 / DSM 4304 / JCM 9628 / NBRC 100126 / VC-16).